Consider the following 212-residue polypeptide: Thymidylate kinase (212 aa).

ATP is bound at residue 10–17 (GLEGAGKT).

It belongs to the thymidylate kinase family.

The enzyme catalyses dTMP + ATP = dTDP + ADP. Functionally, phosphorylation of dTMP to form dTDP in both de novo and salvage pathways of dTTP synthesis. This chain is Thymidylate kinase, found in Serratia proteamaculans (strain 568).